Consider the following 120-residue polypeptide: NAD(P)H-quinone oxidoreductase subunit 3 (120 aa).

3 helical membrane passes run 6–26 (GYDAFLGFLLIAAAVPVLALV), 64–84 (MFALVFVIFDVETVFLYPWAV), and 89–109 (LGLLAFIEALIFIAILLVALA).

This sequence belongs to the complex I subunit 3 family. As to quaternary structure, NDH-1 can be composed of about 15 different subunits; different subcomplexes with different compositions have been identified which probably have different functions.

The protein resides in the cellular thylakoid membrane. It carries out the reaction a plastoquinone + NADH + (n+1) H(+)(in) = a plastoquinol + NAD(+) + n H(+)(out). The enzyme catalyses a plastoquinone + NADPH + (n+1) H(+)(in) = a plastoquinol + NADP(+) + n H(+)(out). Functionally, NDH-1 shuttles electrons from an unknown electron donor, via FMN and iron-sulfur (Fe-S) centers, to quinones in the respiratory and/or the photosynthetic chain. The immediate electron acceptor for the enzyme in this species is believed to be plastoquinone. Couples the redox reaction to proton translocation, and thus conserves the redox energy in a proton gradient. Cyanobacterial NDH-1 also plays a role in inorganic carbon-concentration. The chain is NAD(P)H-quinone oxidoreductase subunit 3 from Synechococcus sp. (strain CC9605).